Here is a 274-residue protein sequence, read N- to C-terminus: Large ribosomal subunit protein uL2 (274 aa).

Residues 223–274 form a disordered region; the sequence is VAMNPVDHPHGGGEGKTSGGRHPVSPWGVPTKGYKTRSNKRTDKFIVRRRAK.

This sequence belongs to the universal ribosomal protein uL2 family. In terms of assembly, part of the 50S ribosomal subunit. Forms a bridge to the 30S subunit in the 70S ribosome.

Functionally, one of the primary rRNA binding proteins. Required for association of the 30S and 50S subunits to form the 70S ribosome, for tRNA binding and peptide bond formation. It has been suggested to have peptidyltransferase activity; this is somewhat controversial. Makes several contacts with the 16S rRNA in the 70S ribosome. The sequence is that of Large ribosomal subunit protein uL2 from Colwellia psychrerythraea (strain 34H / ATCC BAA-681) (Vibrio psychroerythus).